Consider the following 303-residue polypeptide: Glycine--tRNA ligase alpha subunit (303 aa).

It belongs to the class-II aminoacyl-tRNA synthetase family. As to quaternary structure, tetramer of two alpha and two beta subunits.

It is found in the cytoplasm. The catalysed reaction is tRNA(Gly) + glycine + ATP = glycyl-tRNA(Gly) + AMP + diphosphate. The sequence is that of Glycine--tRNA ligase alpha subunit from Stenotrophomonas maltophilia (strain R551-3).